A 209-amino-acid polypeptide reads, in one-letter code: Ribosome maturation factor RimM (209 aa).

A disordered region spans residues 1 to 28; the sequence is MARRPQRPAPSGRAGAGRGAAGAAPPGP. A PRC barrel domain is found at 123-197; that stretch reads EDEFFTADLV…RVTIAPPEDL (75 aa).

It belongs to the RimM family. In terms of assembly, binds ribosomal protein uS19.

The protein resides in the cytoplasm. In terms of biological role, an accessory protein needed during the final step in the assembly of 30S ribosomal subunit, possibly for assembly of the head region. Essential for efficient processing of 16S rRNA. May be needed both before and after RbfA during the maturation of 16S rRNA. It has affinity for free ribosomal 30S subunits but not for 70S ribosomes. In Methylobacterium sp. (strain 4-46), this protein is Ribosome maturation factor RimM.